Here is a 396-residue protein sequence, read N- to C-terminus: Elongation factor Tu (396 aa).

A tr-type G domain is found at 10–206; that stretch reads KPHVNVGTIG…ALDASIPEPK (197 aa). The interval 19–26 is G1; the sequence is GHVDHGKT. A GTP-binding site is contributed by 19–26; the sequence is GHVDHGKT. Threonine 26 serves as a coordination point for Mg(2+). Residues 60–64 form a G2 region; it reads GITIS. Residues 81–84 are G3; it reads DCPG. GTP-binding positions include 81–85 and 136–139; these read DCPGH and NKAD. The tract at residues 136–139 is G4; that stretch reads NKAD. The tract at residues 174 to 176 is G5; the sequence is SAL.

It belongs to the TRAFAC class translation factor GTPase superfamily. Classic translation factor GTPase family. EF-Tu/EF-1A subfamily. In terms of assembly, monomer.

It is found in the cytoplasm. It carries out the reaction GTP + H2O = GDP + phosphate + H(+). Functionally, GTP hydrolase that promotes the GTP-dependent binding of aminoacyl-tRNA to the A-site of ribosomes during protein biosynthesis. The chain is Elongation factor Tu from Dichelobacter nodosus (strain VCS1703A).